Reading from the N-terminus, the 442-residue chain is ATP-dependent protease ATPase subunit HslU (442 aa).

ATP contacts are provided by residues Ile18, 60–65 (GVGKTE), Asp255, Glu320, and Arg392.

Belongs to the ClpX chaperone family. HslU subfamily. A double ring-shaped homohexamer of HslV is capped on each side by a ring-shaped HslU homohexamer. The assembly of the HslU/HslV complex is dependent on binding of ATP.

The protein resides in the cytoplasm. ATPase subunit of a proteasome-like degradation complex; this subunit has chaperone activity. The binding of ATP and its subsequent hydrolysis by HslU are essential for unfolding of protein substrates subsequently hydrolyzed by HslV. HslU recognizes the N-terminal part of its protein substrates and unfolds these before they are guided to HslV for hydrolysis. The polypeptide is ATP-dependent protease ATPase subunit HslU (Aeromonas salmonicida (strain A449)).